Reading from the N-terminus, the 309-residue chain is Ribonuclease Z (309 aa).

7 residues coordinate Zn(2+): His-63, His-65, Asp-67, His-68, His-145, Asp-216, and His-274. The active-site Proton acceptor is the Asp-67.

The protein belongs to the RNase Z family. Homodimer. It depends on Zn(2+) as a cofactor.

It catalyses the reaction Endonucleolytic cleavage of RNA, removing extra 3' nucleotides from tRNA precursor, generating 3' termini of tRNAs. A 3'-hydroxy group is left at the tRNA terminus and a 5'-phosphoryl group is left at the trailer molecule.. Its function is as follows. Zinc phosphodiesterase, which displays some tRNA 3'-processing endonuclease activity. Probably involved in tRNA maturation, by removing a 3'-trailer from precursor tRNA. This is Ribonuclease Z from Streptococcus pneumoniae (strain 70585).